We begin with the raw amino-acid sequence, 170 residues long: uncharacterized protein (170 aa).

Positions 15-81 (EAFDEKAEKE…EREKSKSAVS (67 aa)) form a coiled coil. Positions 20 to 77 (KAEKEKVEKEKALKEKTEKEKAEKEKAEKEKVEKEKAEKEKAAKEKAAKEKAEREKSK) are enriched in basic and acidic residues. The segment at 20-95 (KAEKEKVEKE…NQNSNKGNVE (76 aa)) is disordered. Residues 78–92 (SAVSPATTNQNSNKG) are compositionally biased toward polar residues. The helical transmembrane segment at 98–118 (VAIGVLAGGAVTGVAVGGAYL) threads the bilayer.

The protein localises to the membrane. This is an uncharacterized protein from Dictyostelium discoideum (Social amoeba).